Here is a 513-residue protein sequence, read N- to C-terminus: V-type proton ATPase subunit B, kidney isoform (513 aa).

Arginine 394 is a binding site for ATP. The PDZ-binding motif lies at 510 to 513 (DTAL).

The protein belongs to the ATPase alpha/beta chains family. V-ATPase is a heteromultimeric enzyme made up of two complexes: the ATP-hydrolytic V1 complex and the proton translocation V0 complex. The V1 complex consists of three catalytic AB heterodimers that form a heterohexamer, three peripheral stalks each consisting of EG heterodimers, one central rotor including subunits D and F, and the regulatory subunits C and H. The proton translocation complex V0 consists of the proton transport subunit a, a ring of proteolipid subunits c9c'', rotary subunit d, subunits e and f, and the accessory subunits ATP6AP1/Ac45 and ATP6AP2/PRR. Forms a complex with NHERF1 and SCL4A7. Kidney cortex and medulla.

Its subcellular location is the apical cell membrane. The protein resides in the basolateral cell membrane. In terms of biological role, non-catalytic subunit of the V1 complex of vacuolar(H+)-ATPase (V-ATPase), a multisubunit enzyme composed of a peripheral complex (V1) that hydrolyzes ATP and a membrane integral complex (V0) that translocates protons. V-ATPase is responsible for acidifying and maintaining the pH of intracellular compartments and in some cell types, is targeted to the plasma membrane, where it is responsible for acidifying the extracellular environment. Essential for the proper assembly and activity of V-ATPase. In renal intercalated cells, mediates secretion of protons (H+) into the urine thereby ensuring correct urinary acidification. Required for optimal olfactory function by mediating the acidification of the nasal olfactory epithelium. The chain is V-type proton ATPase subunit B, kidney isoform (ATP6V1B1) from Bos taurus (Bovine).